Consider the following 240-residue polypeptide: MTESHDTPITPDGEARPHRRIKSFVMRAGRMTEGQQRGLDQGGPLYILPLADSPVDYDQVFGRSAPRTLEIGFGMGHSLLEMAAAAPEQDFIGVEVHRPGVGALLNGVLTQGLKNLRVYDCDAIEVLNRCVADNSLDRLMLFFPDPWHKARHHKRRIVQLEFAELVRRKLKPGGVFHMATDWEPYAEYMLEVMSAAPGYRNRAADGTYVPRPEERPITKFERRGERLGHGVWDLKFEKVD.

The segment at 1–20 is disordered; sequence MTESHDTPITPDGEARPHRR. 4 residues coordinate S-adenosyl-L-methionine: Glu70, Glu95, Asp122, and Asp145. The active site involves Asp145. Substrate-binding positions include Lys149, Asp181, and 218 to 221; that span reads TKFE.

This sequence belongs to the class I-like SAM-binding methyltransferase superfamily. TrmB family.

It carries out the reaction guanosine(46) in tRNA + S-adenosyl-L-methionine = N(7)-methylguanosine(46) in tRNA + S-adenosyl-L-homocysteine. It functions in the pathway tRNA modification; N(7)-methylguanine-tRNA biosynthesis. Catalyzes the formation of N(7)-methylguanine at position 46 (m7G46) in tRNA. In Pseudomonas putida (strain ATCC 47054 / DSM 6125 / CFBP 8728 / NCIMB 11950 / KT2440), this protein is tRNA (guanine-N(7)-)-methyltransferase.